Here is a 252-residue protein sequence, read N- to C-terminus: Gastrula zinc finger protein XlCGF28.1 (252 aa).

C2H2-type zinc fingers lie at residues 6-28 (FTCNECGKFFSCTSWLNVHLRSH), 34-56 (FTCSECGKFFSCMSRLKVHFRGH), 62-84 (SACTECEKCFSSISQRNIHIRSH), 90-112 (YTCTVCGKIFTRISQFNVHVRSH), 118-140 (FKCTECGKSFICNSQLNLHLRFH), 146-168 (TTCSECGKCFTHTSHLNVHFRVH), 174-196 (FTCTECGKCLTRQYQLTEHSYLH), 202-224 (YTCTECGKCFTRRYHLTEHSYLH), and 230-252 (FTCTECGKGFTRRSHLKAHSHTH).

Belongs to the krueppel C2H2-type zinc-finger protein family.

Its subcellular location is the nucleus. In terms of biological role, may be involved in transcriptional regulation. This Xenopus laevis (African clawed frog) protein is Gastrula zinc finger protein XlCGF28.1.